The sequence spans 358 residues: Protein RecA (358 aa).

67–74 provides a ligand contact to ATP; it reads GPESSGKT.

Belongs to the RecA family.

It is found in the cytoplasm. In terms of biological role, can catalyze the hydrolysis of ATP in the presence of single-stranded DNA, the ATP-dependent uptake of single-stranded DNA by duplex DNA, and the ATP-dependent hybridization of homologous single-stranded DNAs. It interacts with LexA causing its activation and leading to its autocatalytic cleavage. The sequence is that of Protein RecA from Xenorhabdus nematophila (strain ATCC 19061 / DSM 3370 / CCUG 14189 / LMG 1036 / NCIMB 9965 / AN6).